A 231-amino-acid polypeptide reads, in one-letter code: 5'-methylthioadenosine/S-adenosylhomocysteine nucleosidase (231 aa).

E12 (proton acceptor) is an active-site residue. Substrate contacts are provided by residues G78, M153, and 174–175 (ME). D198 acts as the Proton donor in catalysis.

This sequence belongs to the PNP/UDP phosphorylase family. MtnN subfamily.

It catalyses the reaction S-adenosyl-L-homocysteine + H2O = S-(5-deoxy-D-ribos-5-yl)-L-homocysteine + adenine. The enzyme catalyses S-methyl-5'-thioadenosine + H2O = 5-(methylsulfanyl)-D-ribose + adenine. The catalysed reaction is 5'-deoxyadenosine + H2O = 5-deoxy-D-ribose + adenine. It functions in the pathway amino-acid biosynthesis; L-methionine biosynthesis via salvage pathway; S-methyl-5-thio-alpha-D-ribose 1-phosphate from S-methyl-5'-thioadenosine (hydrolase route): step 1/2. In terms of biological role, catalyzes the irreversible cleavage of the glycosidic bond in both 5'-methylthioadenosine (MTA) and S-adenosylhomocysteine (SAH/AdoHcy) to adenine and the corresponding thioribose, 5'-methylthioribose and S-ribosylhomocysteine, respectively. Also cleaves 5'-deoxyadenosine, a toxic by-product of radical S-adenosylmethionine (SAM) enzymes, into 5-deoxyribose and adenine. The polypeptide is 5'-methylthioadenosine/S-adenosylhomocysteine nucleosidase (Bacillus cytotoxicus (strain DSM 22905 / CIP 110041 / 391-98 / NVH 391-98)).